The following is a 184-amino-acid chain: MSPEKYLNFFKETADKKFQWLKEELSKIRTGRPNPKLFDNLLVESYGDRMPMVALAQIAVNPPREIVIKPFDVKNNINAIYSEIQRANLGVQPVIDGDKIRINFPPMTQESRLESIKQAKKVVEQIHQELRSVRRDTLQMIKKDDHKDEDFEEFLKEEVEKVNKQYIAQLETIQKQKEKELLVV.

Belongs to the RRF family.

Its subcellular location is the cytoplasm. Its function is as follows. Responsible for the release of ribosomes from messenger RNA at the termination of protein biosynthesis. May increase the efficiency of translation by recycling ribosomes from one round of translation to another. The polypeptide is Ribosome-recycling factor (Mycoplasma pneumoniae (strain ATCC 29342 / M129 / Subtype 1) (Mycoplasmoides pneumoniae)).